We begin with the raw amino-acid sequence, 283 residues long: Protoheme IX farnesyltransferase 1 (283 aa).

9 helical membrane passes run 14–34, 35–55, 84–104, 107–127, 133–153, 163–183, 208–228, 231–251, and 258–278; these read IALM…TKVD, PVAL…SAVF, LGFA…NAAF, VVAL…TVWL, TNII…AAAV, VLAL…AILL, ILAN…LGLL, VYGF…VVLV, and WAGW…IAVF.

It belongs to the UbiA prenyltransferase family. Protoheme IX farnesyltransferase subfamily.

The protein resides in the cell inner membrane. The enzyme catalyses heme b + (2E,6E)-farnesyl diphosphate + H2O = Fe(II)-heme o + diphosphate. It functions in the pathway porphyrin-containing compound metabolism; heme O biosynthesis; heme O from protoheme: step 1/1. Its function is as follows. Converts heme B (protoheme IX) to heme O by substitution of the vinyl group on carbon 2 of heme B porphyrin ring with a hydroxyethyl farnesyl side group. In Paramagnetospirillum magneticum (strain ATCC 700264 / AMB-1) (Magnetospirillum magneticum), this protein is Protoheme IX farnesyltransferase 1.